The primary structure comprises 81 residues: MASNEEILAGLAEIVNEETGLAPEAVELDKSFTDDLDIDSISMMTIVVNAEEKFGVRIPDEEVKNLKTVGDAVSYIASAQA.

Positions 2 to 80 constitute a Carrier domain; it reads ASNEEILAGL…DAVSYIASAQ (79 aa). At S40 the chain carries O-(pantetheine 4'-phosphoryl)serine.

This sequence belongs to the acyl carrier protein (ACP) family. Post-translationally, 4'-phosphopantetheine is transferred from CoA to a specific serine of apo-ACP by AcpS. This modification is essential for activity because fatty acids are bound in thioester linkage to the sulfhydryl of the prosthetic group.

It is found in the cytoplasm. It participates in lipid metabolism; fatty acid biosynthesis. Functionally, carrier of the growing fatty acid chain in fatty acid biosynthesis. The polypeptide is Acyl carrier protein (Renibacterium salmoninarum (strain ATCC 33209 / DSM 20767 / JCM 11484 / NBRC 15589 / NCIMB 2235)).